A 462-amino-acid chain; its full sequence is MELNQIIKSGEKMAVHPIDYRYGTPEMRKVWEEENKLEKMLKVEAALAKAQAELGLIPKEAAEEINKKASTKYVKLERVKEIEKQTKHDVVAMIRALAEVCEGNAGEYIHFGATSNDIVDTANSLLIKESIEIIEDKLKQLRDILLDKAEEHKYTVCVGRTHGQHAIPTTYGMRFALWAAEIDRHLERLKEAKKRICVSMITGAVGTMAAMGEKGLEVHKRVAEILGLEPVLISNQVIQRDRHAEFVFLLALIAQTLNKIGVTVRSMQRTEIGELEEEFDPTKQTGSSTMPHKRNPITFEQICGLSRVIKSLCIAEMDNIPLWEERDLTNSSAERCIFAEVCVLTDHILTLAIKGVKKLKVNKENVERNLELTKGLIMAERIMIELAKRGMGRQTAHEIVRQCAMKAYEEKRHLKDILLENEEVMKYITKEELEELMNPKTYIGLAPQIVDEVIKTLKNKKY.

N(6)-(1,2-dicarboxyethyl)-AMP contacts are provided by residues 21-22, 87-89, and 114-115; these read RY, KHD, and TS. Residue H162 is the Proton donor/acceptor of the active site. Position 236 (Q236) interacts with N(6)-(1,2-dicarboxyethyl)-AMP. S287 acts as the Proton donor/acceptor in catalysis. N(6)-(1,2-dicarboxyethyl)-AMP-binding positions include S288, 293–295, and 332–336; these read KRN and SAERC.

It belongs to the lyase 1 family. Adenylosuccinate lyase subfamily. As to quaternary structure, homotetramer. Residues from neighboring subunits contribute catalytic and substrate-binding residues to each active site.

It carries out the reaction N(6)-(1,2-dicarboxyethyl)-AMP = fumarate + AMP. It catalyses the reaction (2S)-2-[5-amino-1-(5-phospho-beta-D-ribosyl)imidazole-4-carboxamido]succinate = 5-amino-1-(5-phospho-beta-D-ribosyl)imidazole-4-carboxamide + fumarate. The protein operates within purine metabolism; AMP biosynthesis via de novo pathway; AMP from IMP: step 2/2. It functions in the pathway purine metabolism; IMP biosynthesis via de novo pathway; 5-amino-1-(5-phospho-D-ribosyl)imidazole-4-carboxamide from 5-amino-1-(5-phospho-D-ribosyl)imidazole-4-carboxylate: step 2/2. Functionally, catalyzes two reactions in de novo purine nucleotide biosynthesis. Catalyzes the breakdown of 5-aminoimidazole- (N-succinylocarboxamide) ribotide (SAICAR or 2-[5-amino-1-(5-phospho-beta-D-ribosyl)imidazole-4-carboxamido]succinate) to 5-aminoimidazole-4-carboxamide ribotide (AICAR or 5-amino-1-(5-phospho-beta-D-ribosyl)imidazole-4-carboxamide) and fumarate, and of adenylosuccinate (ADS or N(6)-(1,2-dicarboxyethyl)-AMP) to adenosine monophosphate (AMP) and fumarate. This Methanocaldococcus jannaschii (strain ATCC 43067 / DSM 2661 / JAL-1 / JCM 10045 / NBRC 100440) (Methanococcus jannaschii) protein is Adenylosuccinate lyase (purB).